Reading from the N-terminus, the 177-residue chain is MWSLALTLPSPSLVSVRSTKLGRSVSNGGRNWSGLTKLSEKSKTKRGNGLCCKAELSELAPVVSATYGVLLLGGGLFAYSKSGSKGSLFGGLTGSVLMASAYFLTKSPETRVLGDTIGLGAAFLFSSVFGFRLASSRKPVPAGPLLLLSIGMLSFFVMAYMHDSLPAISIPDPLPLP.

The N-terminal 63 residues, 1–63 (MWSLALTLPS…AELSELAPVV (63 aa)), are a transit peptide targeting the chloroplast. A run of 3 helical transmembrane segments spans residues 85 to 105 (KGSL…YFLT), 111 to 131 (RVLG…VFGF), and 140 to 160 (VPAG…VMAY).

Belongs to the TMEM14 family.

The protein localises to the plastid. Its subcellular location is the chloroplast membrane. Its function is as follows. May be involved in free fatty acids export from the plastids. This is Protein FATTY ACID EXPORT 4, chloroplastic from Arabidopsis thaliana (Mouse-ear cress).